The primary structure comprises 88 residues: Small ribosomal subunit protein bS16 (88 aa).

It belongs to the bacterial ribosomal protein bS16 family.

This Staphylococcus saprophyticus subsp. saprophyticus (strain ATCC 15305 / DSM 20229 / NCIMB 8711 / NCTC 7292 / S-41) protein is Small ribosomal subunit protein bS16.